The following is a 356-amino-acid chain: tRNA-specific 2-thiouridylase MnmA (356 aa).

Residues 6–13 and Leu-32 contribute to the ATP site; that span reads GMSGGVDS. Cys-102 serves as the catalytic Nucleophile. Cys-102 and Cys-200 are joined by a disulfide. Gly-127 is a binding site for ATP. The interaction with tRNA stretch occupies residues 150 to 152; that stretch reads RDQ. Residue Cys-200 is the Cysteine persulfide intermediate of the active site. Residues 302–303 form an interaction with tRNA region; the sequence is RY.

It belongs to the MnmA/TRMU family.

The protein localises to the cytoplasm. The enzyme catalyses S-sulfanyl-L-cysteinyl-[protein] + uridine(34) in tRNA + AH2 + ATP = 2-thiouridine(34) in tRNA + L-cysteinyl-[protein] + A + AMP + diphosphate + H(+). Its function is as follows. Catalyzes the 2-thiolation of uridine at the wobble position (U34) of tRNA, leading to the formation of s(2)U34. The polypeptide is tRNA-specific 2-thiouridylase MnmA (Aquifex aeolicus (strain VF5)).